The following is a 387-amino-acid chain: BTB and MATH domain-containing protein 38 (387 aa).

Residues 79 to 204 (EGMLKLEIPN…NEMVTVTARV (126 aa)) enclose the MATH domain. The 68-residue stretch at 228–295 (CDMTLVINKQ…IYPCHKPITS (68 aa)) folds into the BTB domain.

The chain is BTB and MATH domain-containing protein 38 (bath-38) from Caenorhabditis elegans.